Here is a 37-residue protein sequence, read N- to C-terminus: Mating pheromone Er-20 (37 aa).

Intrachain disulfides connect C3–C18, C10–C32, and C15–C24.

In terms of assembly, homodimer.

It is found in the secreted. Mating ciliate pheromones (or gamones) are diffusible extracellular communication signals that distinguish different intraspecific classes of cells commonly referred to as 'mating types'. They prepare the latter for conjugation by changing their cell surface properties. This Euplotes raikovi protein is Mating pheromone Er-20 (MAT20).